Here is a 278-residue protein sequence, read N- to C-terminus: MGLRLYKPYTASTRNRSVSDFSEITEKKPEKTLTSWVFRSKGRNNRGIITSRHLGGGHKRLYRLIDFKRQKIGILGKVATIEYDPNRNARIVLLHYQDGAKGYILHPRGLKVGGTVVTSPEAPILIGNCLPLKAIPLGTEVHNVELYSGMGGQLSRAAGSSAQIVAKEGRFVTLRLPSGEVRLVSQNCWATIGQVGNVDANNIRIGKAGRMRWLGRRPKVRGVVMNPNDHPHGGGEGRSPIGRKCPVSLWGRLALGERTRKSKKYSNKLILKRRKASK.

Positions 222 to 241 are disordered; sequence GVVMNPNDHPHGGGEGRSPI.

Belongs to the universal ribosomal protein uL2 family. Part of the 50S ribosomal subunit.

Its subcellular location is the plastid. The protein resides in the chloroplast. This Tupiella akineta (Green alga) protein is Large ribosomal subunit protein uL2c (rpl2).